Reading from the N-terminus, the 376-residue chain is MEEKGSRMVQQGNQEAAAAPDTMAQPYASAQFAPPQNGIPAEYTAPHPHPAPEYTGQTTVPEHTLNLYPPAQTHSEQSPADTNAQTVSGTATQTDDAAPTDGQPQTQPSENTENKSQPKRLHVSNIPFRFRDPDLRQMFGQFGKILDVEIIFNERGSKGFGFVTFENSADADRAREKLHGTVVEGRKIEVNNATARVMTNKKTVNPYTNGWKLNPVVGAVYSPEFYAGTVLLCQANQEGSSMYSAPSSLVYTSAMPGFPYPAATAAAAYRGAHLRGRGRTVYNTFRAAAPPPPIPAYGGVVYQDGFYGADIYGGYAAYRYAQPTPATAAAYSDRNQFVFVAADEISCNTSAVTDEFMLPTPTTTHLLQPPPTALVP.

The interval 1 to 126 is disordered; it reads MEEKGSRMVQ…QPKRLHVSNI (126 aa). Over residues 72–89 the composition is skewed to polar residues; that stretch reads QTHSEQSPADTNAQTVSG. Residues 90 to 101 are compositionally biased toward low complexity; the sequence is TATQTDDAAPTD. Polar residues predominate over residues 102 to 115; that stretch reads GQPQTQPSENTENK. Positions 119-195 constitute an RRM domain; it reads KRLHVSNIPF…RKIEVNNATA (77 aa). Asymmetric dimethylarginine is present on R319.

In terms of assembly, binds to the C-terminus of ATXN2.

It is found in the nucleus. Its subcellular location is the cytoplasm. RNA-binding protein that regulates alternative splicing events by binding to 5'-UGCAUGU-3' elements. Prevents binding of U2AF2 to the 3'-splice site. Regulates alternative splicing of tissue-specific exons and of differentially spliced exons during erythropoiesis. This Macaca fascicularis (Crab-eating macaque) protein is RNA binding protein fox-1 homolog 1 (RBFOX1).